The chain runs to 393 residues: Anhydro-N-acetylmuramic acid kinase (393 aa).

9–16 (GTSADGVD) serves as a coordination point for ATP.

Belongs to the anhydro-N-acetylmuramic acid kinase family.

The catalysed reaction is 1,6-anhydro-N-acetyl-beta-muramate + ATP + H2O = N-acetyl-D-muramate 6-phosphate + ADP + H(+). The protein operates within amino-sugar metabolism; 1,6-anhydro-N-acetylmuramate degradation. Its pathway is cell wall biogenesis; peptidoglycan recycling. Its function is as follows. Catalyzes the specific phosphorylation of 1,6-anhydro-N-acetylmuramic acid (anhMurNAc) with the simultaneous cleavage of the 1,6-anhydro ring, generating MurNAc-6-P. Is required for the utilization of anhMurNAc either imported from the medium or derived from its own cell wall murein, and thus plays a role in cell wall recycling. This chain is Anhydro-N-acetylmuramic acid kinase, found in Acidithiobacillus ferrooxidans (strain ATCC 23270 / DSM 14882 / CIP 104768 / NCIMB 8455) (Ferrobacillus ferrooxidans (strain ATCC 23270)).